Consider the following 258-residue polypeptide: Imidazole glycerol phosphate synthase subunit HisF (258 aa).

Residues Asp11 and Asp130 contribute to the active site.

Belongs to the HisA/HisF family. Heterodimer of HisH and HisF.

It is found in the cytoplasm. The catalysed reaction is 5-[(5-phospho-1-deoxy-D-ribulos-1-ylimino)methylamino]-1-(5-phospho-beta-D-ribosyl)imidazole-4-carboxamide + L-glutamine = D-erythro-1-(imidazol-4-yl)glycerol 3-phosphate + 5-amino-1-(5-phospho-beta-D-ribosyl)imidazole-4-carboxamide + L-glutamate + H(+). The protein operates within amino-acid biosynthesis; L-histidine biosynthesis; L-histidine from 5-phospho-alpha-D-ribose 1-diphosphate: step 5/9. In terms of biological role, IGPS catalyzes the conversion of PRFAR and glutamine to IGP, AICAR and glutamate. The HisF subunit catalyzes the cyclization activity that produces IGP and AICAR from PRFAR using the ammonia provided by the HisH subunit. The polypeptide is Imidazole glycerol phosphate synthase subunit HisF (Lachnoclostridium phytofermentans (strain ATCC 700394 / DSM 18823 / ISDg) (Clostridium phytofermentans)).